Reading from the N-terminus, the 590-residue chain is Shugoshin (590 aa).

The segment at 1-20 (MPKRKIAPNKESSRRTVSHD) is disordered. Residues 11-20 (ESSRRTVSHD) show a composition bias toward basic and acidic residues. Residues 25-86 (QIQEFQNLMD…QENVTLRSKT (62 aa)) adopt a coiled-coil conformation. 3 disordered regions span residues 133–235 (LRTM…QVEE), 291–337 (PSNP…HSMK), and 411–550 (RNRE…NSNI). The segment covering 173–185 (SFNKDDGPDLEPK) has biased composition (basic and acidic residues). Residues 302–326 (PSATLPTTTSDASTVYPSSSSSTNS) are compositionally biased toward low complexity. Residues 328-337 (PKTKIKHSMK) show a composition bias toward basic residues. The span at 448-459 (KKTEDEIHEDTA) shows a compositional bias: basic and acidic residues. Positions 513–526 (IVNNLSDENSTTRP) are enriched in polar residues. Over residues 527-550 (SKSSKGTSNNNNNYNNFDNNNSNI) the composition is skewed to low complexity.

This sequence belongs to the shugoshin family. Ubiquitinated by the anaphase promoting complex (APC) at the onset of anaphase, conducting to its degradation.

It localises to the chromosome. The protein localises to the centromere. Its subcellular location is the kinetochore. The protein resides in the cytoplasm. It is found in the cytoskeleton. It localises to the spindle pole. Its function is as follows. Plays a central role in chromosome cohesion during mitosis and meiosis divisions by preventing premature dissociation of cohesin complex from centromeres after prophase, when most of cohesin complex dissociates from chromosomes arms. Probably act by protecting REC8 and RAD21 from separase degradation during anaphase. Also acts as a spindle checkpoint component required for sensing tension between sister chromatids during mitosis, its degradation when they separate preventing cell cycle arrest and chromosome loss in anaphase, a time when sister chromatids are no longer under tension. The polypeptide is Shugoshin (SGO1) (Saccharomyces cerevisiae (strain ATCC 204508 / S288c) (Baker's yeast)).